Reading from the N-terminus, the 500-residue chain is MSHSVPNALMTGADYLDSLRDGRQVYLNGERVADVTRHRAFRNACRSIAGLYDGLHGEQRDVLTRVDAQGRRSHRFFTPAQNAEDLLGAREAIGCWSRMTYGFMGRTPDYKAAFMSGLEAGAGFYGDYRHNACAWHRAFADRGLFLNHAIINPPLDRSKAIHEMRDVFVHVERETDQGIVVSGAKMLATGSAITNATFVAPVASAQMEAGKAEDFAVVFFARMDNPGLRLMCRPSYEERASSPFDYPLSSRFDENDSVLLFDKALIPWEDVLVYRDLRRATGFYAESGFANLYNFQSGIRLGVKLELMIGLLSLGVRANGTQSFRGIQAALGELIALQHLLQALTTAMARDPERNAAGSAVPRLEYANALRIQVPQIWKRVRELLESALGGAPLVTVSGAADLRDGEARRLVDSYYRGAELEPEQRLKLFKLIWDATGSEFGARHAVYESHYSGNAEQIRLDSLAWASRRGHLAYCEAMVQRCMADYDIHGWLRGPWQHD.

FAD is required as a cofactor.

It functions in the pathway siderophore biosynthesis; pyoverdin biosynthesis. This Pseudomonas aeruginosa (strain ATCC 15692 / DSM 22644 / CIP 104116 / JCM 14847 / LMG 12228 / 1C / PRS 101 / PAO1) protein is Pyoverdin chromophore biosynthetic protein PvcC (pvcC).